Here is a 223-residue protein sequence, read N- to C-terminus: DNA mismatch repair protein MutH (223 aa).

The protein belongs to the MutH family.

The protein localises to the cytoplasm. In terms of biological role, sequence-specific endonuclease that cleaves unmethylated GATC sequences. It is involved in DNA mismatch repair. In Shewanella sp. (strain ANA-3), this protein is DNA mismatch repair protein MutH.